The chain runs to 257 residues: Probable ABC transporter arginine-binding protein ArtJ (257 aa).

The N-terminal stretch at 1–23 (MCIKRKKTWIAFLAVVCSFCLTG) is a signal peptide. The L-arginine site is built by asparagine 41, glutamate 48, glycine 100, serine 102, arginine 107, and tyrosine 151.

This sequence belongs to the bacterial solute-binding protein 3 family.

It localises to the secreted. The protein resides in the cell surface. In terms of biological role, probably part of an ABC transporter complex involved in arginine transport. Binds arginine. Interacts with host epithelial cells, suggesting a role in host-cell adhesion during infection. The chain is Probable ABC transporter arginine-binding protein ArtJ from Chlamydia trachomatis serovar D (strain ATCC VR-885 / DSM 19411 / UW-3/Cx).